The chain runs to 269 residues: Phosphonoacetaldehyde hydrolase (269 aa).

The active-site Nucleophile is the Asp-10. Asp-10 and Ala-12 together coordinate Mg(2+). Catalysis depends on Lys-52, which acts as the Schiff-base intermediate with substrate. A Mg(2+)-binding site is contributed by Asp-186.

Belongs to the HAD-like hydrolase superfamily. PhnX family. In terms of assembly, homodimer. Requires Mg(2+) as cofactor.

The enzyme catalyses phosphonoacetaldehyde + H2O = acetaldehyde + phosphate + H(+). Its function is as follows. Involved in phosphonate degradation. In Salmonella agona (strain SL483), this protein is Phosphonoacetaldehyde hydrolase.